Here is a 748-residue protein sequence, read N- to C-terminus: Polyribonucleotide nucleotidyltransferase (748 aa).

The Mg(2+) site is built by Asp-484 and Asp-490. Residues Pro-551–Ile-610 enclose the KH domain. Residues Gly-620–Arg-688 enclose the S1 motif domain. Positions Glu-693–Ser-748 are disordered. Over residues Asp-699 to Glu-736 the composition is skewed to basic and acidic residues.

This sequence belongs to the polyribonucleotide nucleotidyltransferase family. Mg(2+) serves as cofactor.

It localises to the cytoplasm. It catalyses the reaction RNA(n+1) + phosphate = RNA(n) + a ribonucleoside 5'-diphosphate. Its function is as follows. Involved in mRNA degradation. Catalyzes the phosphorolysis of single-stranded polyribonucleotides processively in the 3'- to 5'-direction. The polypeptide is Polyribonucleotide nucleotidyltransferase (Zymomonas mobilis subsp. mobilis (strain ATCC 31821 / ZM4 / CP4)).